The primary structure comprises 186 residues: Phosphoheptose isomerase 1 (186 aa).

The region spanning 33–186 is the SIS domain; that stretch reads LCECLKKGGK…TLCQIIDESF (154 aa). Substrate is bound at residue 48–50; that stretch reads NGG. Zn(2+)-binding residues include His57 and Glu61. Residues Glu61, 90 to 91, 116 to 118, Ser121, and Gln168 each bind substrate; these read ND and STS. Zn(2+)-binding residues include Gln168 and His176.

It belongs to the SIS family. GmhA subfamily. Homotetramer. Zn(2+) serves as cofactor.

Its subcellular location is the cytoplasm. It catalyses the reaction 2 D-sedoheptulose 7-phosphate = D-glycero-alpha-D-manno-heptose 7-phosphate + D-glycero-beta-D-manno-heptose 7-phosphate. Its pathway is carbohydrate biosynthesis; D-glycero-D-manno-heptose 7-phosphate biosynthesis; D-glycero-alpha-D-manno-heptose 7-phosphate and D-glycero-beta-D-manno-heptose 7-phosphate from sedoheptulose 7-phosphate: step 1/1. It participates in bacterial outer membrane biogenesis; LOS core biosynthesis. Functionally, catalyzes the isomerization of sedoheptulose 7-phosphate in D-glycero-D-manno-heptose 7-phosphate. This is Phosphoheptose isomerase 1 (gmhA1) from Campylobacter jejuni subsp. jejuni serotype O:2 (strain ATCC 700819 / NCTC 11168).